Here is a 538-residue protein sequence, read N- to C-terminus: Syncytin-1 (538 aa).

The first 20 residues, 1–20, serve as a signal peptide directing secretion; it reads MALPYHIFLFTVLLPSFTLT. The Extracellular segment spans residues 21–443; that stretch reads APPPCRCMTS…NIGPWGLFSQ (423 aa). The N-linked (GlcNAc...) asparagine glycan is linked to asparagine 169. A CXXC motif is present at residues 186 to 189; it reads CWMC. 3 cysteine pairs are disulfide-bonded: cysteine 186/cysteine 189, cysteine 186/cysteine 405, and cysteine 397/cysteine 404. N-linked (GlcNAc...) asparagine glycans are attached at residues asparagine 208, asparagine 214, asparagine 234, asparagine 242, asparagine 245, and asparagine 281. The segment at 320–340 is fusion peptide; that stretch reads ILPFVMAAGVLGALGTGIGGI. The interval 380-396 is immunosuppression; it reads LQNRRALDLLTAERGGT. A CX6CC motif is present at residues 397-405; sequence CLFLGEECC. A glycan (N-linked (GlcNAc...) asparagine) is linked at asparagine 409. Residues 444-464 traverse the membrane as a helical segment; sequence WMPWILPFLGPLAAIILLLLF. The tract at residues 465–484 is essential for the fusiogenic function; that stretch reads GPCIFNLLVNFVSSRIEAVK. The Cytoplasmic portion of the chain corresponds to 465–538; that stretch reads GPCIFNLLVN…LLRPNSAGSS (74 aa). Residues 501-538 form a disordered region; the sequence is PLDWPASPRSDVNDIKGTPPEEISTAQPLLRPNSAGSS.

It belongs to the gamma type-C retroviral envelope protein family. HERV class-I W env subfamily. In terms of assembly, the mature envelope protein (Env) consists of a trimer of SU-TM heterodimers attached probably by a labile interchain disulfide bond. Interacts with the C-type lectin CD209/DC-SIGN. Post-translationally, specific enzymatic cleavages in vivo yield mature proteins. Envelope glycoproteins are synthesized as an inactive precursor that is heavily N-glycosylated and processed likely by furin in the Golgi to yield the mature SU and TM proteins. The cleavage site between SU and TM requires the minimal sequence [KR]-X-[KR]-R. In terms of processing, the CXXC motif is highly conserved across a broad range of retroviral envelope proteins. It is thought to participate in the formation of a labile disulfide bond possibly with the CX6CC motif present in the transmembrane protein.

Its subcellular location is the cell membrane. It is found in the virion. Its function is as follows. This endogenous retroviral envelope protein has retained its original fusogenic properties and participates in trophoblast fusion and the formation of a syncytium during placenta morphogenesis. May recognize and induce fusion through binding of SLC1A4 and SLC1A5. Endogenous envelope proteins may have kept, lost or modified their original function during evolution. Retroviral envelope proteins mediate receptor recognition and membrane fusion during early infection. The surface protein (SU) mediates receptor recognition, while the transmembrane protein (TM) acts as a class I viral fusion protein. The protein may have at least 3 conformational states: pre-fusion native state, pre-hairpin intermediate state, and post-fusion hairpin state. During viral and target cell membrane fusion, the coiled coil regions (heptad repeats) assume a trimer-of-hairpins structure, positioning the fusion peptide in close proximity to the C-terminal region of the ectodomain. The formation of this structure appears to drive apposition and subsequent fusion of membranes. The polypeptide is Syncytin-1 (ERVW-1) (Pongo pygmaeus (Bornean orangutan)).